Reading from the N-terminus, the 533-residue chain is Glucose-6-phosphate isomerase (533 aa).

The active-site Proton donor is the glutamate 322. Residues histidine 351 and lysine 455 contribute to the active site.

It belongs to the GPI family.

It is found in the cytoplasm. It catalyses the reaction alpha-D-glucose 6-phosphate = beta-D-fructose 6-phosphate. The protein operates within carbohydrate biosynthesis; gluconeogenesis. Its pathway is carbohydrate degradation; glycolysis; D-glyceraldehyde 3-phosphate and glycerone phosphate from D-glucose: step 2/4. Functionally, catalyzes the reversible isomerization of glucose-6-phosphate to fructose-6-phosphate. The protein is Glucose-6-phosphate isomerase of Desulfitobacterium hafniense (strain Y51).